The chain runs to 346 residues: Phosphate acyltransferase (346 aa).

It belongs to the PlsX family. In terms of assembly, homodimer. Probably interacts with PlsY.

The protein resides in the cytoplasm. The catalysed reaction is a fatty acyl-[ACP] + phosphate = an acyl phosphate + holo-[ACP]. It participates in lipid metabolism; phospholipid metabolism. Functionally, catalyzes the reversible formation of acyl-phosphate (acyl-PO(4)) from acyl-[acyl-carrier-protein] (acyl-ACP). This enzyme utilizes acyl-ACP as fatty acyl donor, but not acyl-CoA. The protein is Phosphate acyltransferase of Geotalea uraniireducens (strain Rf4) (Geobacter uraniireducens).